Consider the following 651-residue polypeptide: L-type lectin-domain containing receptor kinase IX.1 (651 aa).

An N-terminal signal peptide occupies residues 1–19 (MANSILLFSFVLVLPFVCS). The interval 20–251 (VQFNISRFGS…GNRLLSWEFS (232 aa)) is legume-lectin like. At 20–269 (VQFNISRFGS…KKSQNDKKGM (250 aa)) the chain is on the extracellular side. 8 N-linked (GlcNAc...) asparagine glycosylation sites follow: N23, N125, N129, N162, N169, N174, N195, and N211. Residues 270–290 (IIGISVSGFVLLTFFITSLIV) traverse the membrane as a helical segment. Topologically, residues 291 to 651 (FLKRKQQKKK…VTFSSAQHGR (361 aa)) are cytoplasmic. One can recognise a Protein kinase domain in the interval 335 to 616 (FADDRKLGEG…LNLEAPVPHL (282 aa)). ATP contacts are provided by residues 341-349 (LGEGGFGAV) and K364. Catalysis depends on D459, which acts as the Proton acceptor. The segment at 630 to 651 (SNTTSVSSGGATVTFSSAQHGR) is disordered.

In the C-terminal section; belongs to the protein kinase superfamily. Ser/Thr protein kinase family. The protein in the N-terminal section; belongs to the leguminous lectin family. In terms of assembly, interacts with ABCG40.

The protein resides in the cell membrane. The catalysed reaction is L-seryl-[protein] + ATP = O-phospho-L-seryl-[protein] + ADP + H(+). It carries out the reaction L-threonyl-[protein] + ATP = O-phospho-L-threonyl-[protein] + ADP + H(+). In terms of biological role, promotes hydrogen peroxide H(2)O(2) production and cell death. Functionally, involved in resistance response to the pathogenic oomycetes Phytophthora infestans and Phytophthora capsici. This chain is L-type lectin-domain containing receptor kinase IX.1, found in Arabidopsis thaliana (Mouse-ear cress).